The sequence spans 341 residues: L-threonine 3-dehydrogenase (341 aa).

Residue C38 participates in Zn(2+) binding. Catalysis depends on charge relay system residues T40 and H43. Zn(2+) contacts are provided by H63, E64, C93, C96, C99, and C107. NAD(+) contacts are provided by residues I175, D195, R200, L262 to I264, and I286 to Y287.

The protein belongs to the zinc-containing alcohol dehydrogenase family. In terms of assembly, homotetramer. The cofactor is Zn(2+).

The protein resides in the cytoplasm. It carries out the reaction L-threonine + NAD(+) = (2S)-2-amino-3-oxobutanoate + NADH + H(+). The protein operates within amino-acid degradation; L-threonine degradation via oxydo-reductase pathway; glycine from L-threonine: step 1/2. Its function is as follows. Catalyzes the NAD(+)-dependent oxidation of L-threonine to 2-amino-3-ketobutyrate. This is L-threonine 3-dehydrogenase from Idiomarina loihiensis (strain ATCC BAA-735 / DSM 15497 / L2-TR).